The sequence spans 737 residues: Acetylcholinesterase (737 aa).

The signal sequence occupies residues 1 to 38 (MEIRGLLMGRLRLGRRMVPLGLLGVTALLLILPPFALV). The tract at residues 141 to 168 (HSGATPRRRGLTRRESNSDANDNDPLVV) is disordered. A glycan (N-linked (GlcNAc...) asparagine) is linked at asparagine 220. Cysteine 228 and cysteine 255 form a disulfide bridge. The active-site Acyl-ester intermediate is serine 360. Residues cysteine 414 and cysteine 427 are joined by a disulfide bond. Residues glutamate 486 and histidine 600 each act as charge relay system in the active site. Cysteine 562 and cysteine 683 are disulfide-bonded. Residue asparagine 670 is glycosylated (N-linked (GlcNAc...) asparagine).

The protein belongs to the type-B carboxylesterase/lipase family.

The protein localises to the synapse. The catalysed reaction is acetylcholine + H2O = choline + acetate + H(+). Functionally, rapidly hydrolyzes choline released into the synapse. This is Acetylcholinesterase (Ace) from Anopheles gambiae (African malaria mosquito).